The chain runs to 530 residues: uncharacterized protein (530 aa).

Helical transmembrane passes span 4 to 23 (FLAA…GLAI), 28 to 47 (LFGV…VVST), 57 to 79 (FVFQ…PAFF), 91 to 113 (LFMI…AFGL), and 148 to 170 (VIGY…AVGA). The RCK C-terminal domain occupies 260–344 (LGGECDTKIE…MGEVRRFLGD (85 aa)). The next 4 helical transmembrane spans lie at 352–374 (VNLL…PVPL), 379–398 (TMYL…LGAL), 419–441 (LGLA…QALT), and 451–473 (VGFA…LLKL).

This sequence belongs to the AAE transporter (TC 2.A.81) family.

It is found in the cell membrane. This is an uncharacterized protein from Corynebacterium efficiens (strain DSM 44549 / YS-314 / AJ 12310 / JCM 11189 / NBRC 100395).